A 99-amino-acid polypeptide reads, in one-letter code: Malonate decarboxylase acyl carrier protein (99 aa).

At serine 25 the chain carries O-(phosphoribosyl dephospho-coenzyme A)serine.

The protein belongs to the MdcC family. Covalently binds the prosthetic group of malonate decarboxylase.

It is found in the cytoplasm. Subunit of malonate decarboxylase, it is an acyl carrier protein to which acetyl and malonyl thioester residues are bound via a 2'-(5''-phosphoribosyl)-3'-dephospho-CoA prosthetic group and turn over during the catalytic mechanism. This is Malonate decarboxylase acyl carrier protein from Pseudomonas putida (strain GB-1).